A 643-amino-acid polypeptide reads, in one-letter code: Transducer protein Htr8 (643 aa).

Helical transmembrane passes span 48–68 (VFVL…GTES), 79–99 (PGIL…LASI), 115–134 (VLAS…EAHF), 149–169 (WLPF…FGMI), and 184–204 (PWVW…ALMA). Positions 273 to 326 (ERLEATANTYGAAMARAADGDLSVRLDPDVENDAMAAIAASFNEMLDETETTIR) constitute an HAMP domain. A Methyl-accepting transducer domain is found at 345–581 (GVVEIEDASG…EAVSMIAEVS (237 aa)).

The protein belongs to the methyl-accepting chemotaxis (MCP) protein family. In terms of processing, methylated by CheR.

Its subcellular location is the cell membrane. Functionally, potentially involved in chemo- or phototactic signal transduction. This is Transducer protein Htr8 (htr8) from Halobacterium salinarum (strain ATCC 29341 / DSM 671 / R1).